A 422-amino-acid polypeptide reads, in one-letter code: Dihydrolipoyllysine-residue succinyltransferase component of 2-oxoglutarate dehydrogenase complex (422 aa).

One can recognise a Lipoyl-binding domain in the interval 1-76 (MPEVKVPELA…EVGQAIAIIG (76 aa)). K42 is subject to N6-lipoyllysine. The disordered stretch occupies residues 77 to 185 (EGSGNASKEN…SAKEEKKYNQ (109 aa)). Composition is skewed to polar residues over residues 80 to 94 (GNAS…TPQQ) and 116 to 130 (NQAN…NATP). One can recognise a Peripheral subunit-binding (PSBD) domain in the interval 127-163 (NATPSARRYARENGVNLAEVSPKTNDVVRKEDIDKKQ). The span at 152-163 (DVVRKEDIDKKQ) shows a compositional bias: basic and acidic residues. A compositionally biased stretch (low complexity) spans 164–176 (QAPASTQTTQQAS). Active-site residues include H393 and D397.

It belongs to the 2-oxoacid dehydrogenase family. As to quaternary structure, forms a 24-polypeptide structural core with octahedral symmetry. Part of the 2-oxoglutarate dehydrogenase (OGDH) complex composed of E1 (2-oxoglutarate dehydrogenase), E2 (dihydrolipoamide succinyltransferase) and E3 (dihydrolipoamide dehydrogenase); the complex contains multiple copies of the three enzymatic components (E1, E2 and E3). The cofactor is (R)-lipoate.

The enzyme catalyses N(6)-[(R)-dihydrolipoyl]-L-lysyl-[protein] + succinyl-CoA = N(6)-[(R)-S(8)-succinyldihydrolipoyl]-L-lysyl-[protein] + CoA. The protein operates within amino-acid degradation; L-lysine degradation via saccharopine pathway; glutaryl-CoA from L-lysine: step 6/6. Functionally, E2 component of the 2-oxoglutarate dehydrogenase (OGDH) complex which catalyzes the second step in the conversion of 2-oxoglutarate to succinyl-CoA and CO(2). The polypeptide is Dihydrolipoyllysine-residue succinyltransferase component of 2-oxoglutarate dehydrogenase complex (odhB) (Staphylococcus aureus (strain USA300)).